A 304-amino-acid polypeptide reads, in one-letter code: Nucleotide-binding protein SH2124 (304 aa).

19-26 (GLSGAGKS) is an ATP binding site. 70-73 (DLRG) serves as a coordination point for GTP.

It belongs to the RapZ-like family.

Functionally, displays ATPase and GTPase activities. The polypeptide is Nucleotide-binding protein SH2124 (Staphylococcus haemolyticus (strain JCSC1435)).